Consider the following 426-residue polypeptide: MLFHSLSGPEVHGVIDEMDRRQERGSGISSAIDRGDTETTMPSISSDRAALCAGCGGKISDRYYLLAVDKQWHMRCLKCCECKLNLESELTCFSKDGSIYCKEDYYRRFSVQRCARCHLGISESEMVMRARDLVYHLNCFTCTTCNKMLTTGDHFGMKDSLVYCRLHFEALLQGEYPPHFNHADVARAAAAAEQLRVQDWAQLGLTLGLPYYNGVGTVQKGRPRKRKSPGPGADLAAYNAALSCNENDAEHLDRDQPYPSSQKTKRMRTSFKHHQLRTMKSYFAINHNPDAKDLKQLAQKTGLTKRVLQVWFQNARAKFRRNLLRQENTGVDKTSDATLQTGTPSGPASELSNASLSPSSTPTTLTDLTSPTLPTVTSVLTSVPGNLEATSPTALHKRLLPTFSNDSPPPSPLSPHDFFKKEIIFS.

A compositionally biased stretch (basic and acidic residues) spans 14-24 (VIDEMDRRQER). Residues 14–42 (VIDEMDRRQERGSGISSAIDRGDTETTMP) form a disordered region. LIM zinc-binding domains lie at 52-104 (CAGC…CKED) and 114-167 (CARC…CRLH). Residues 248-268 (DAEHLDRDQPYPSSQKTKRMR) form a disordered region. Residues 264-323 (TKRMRTSFKHHQLRTMKSYFAINHNPDAKDLKQLAQKTGLTKRVLQVWFQNARAKFRRNL) constitute a DNA-binding region (homeobox). The Nuclear localization signal signature appears at 305 to 321 (KRVLQVWFQNARAKFRR). Residues 326–354 (QENTGVDKTSDATLQTGTPSGPASELSNA) are compositionally biased toward polar residues. Positions 326–370 (QENTGVDKTSDATLQTGTPSGPASELSNASLSPSSTPTTLTDLTS) are disordered. Residues 355-370 (SLSPSSTPTTLTDLTS) are compositionally biased toward low complexity.

As to quaternary structure, interacts (via LIM domains) with CITED2. Interacts with POU4F2. Found in discrete regions of the developing CNS, primarily in diencephalic and telencephalic structures and a subset of lymphoid tissues. Also found in embryonic spinal cord and fetal liver.

It is found in the nucleus. Acts as a transcriptional activator. Stimulates the promoter of the alpha-glycoprotein gene. Transcriptional regulatory protein involved in the control of cell differentiation in developing lymphoid and neural cell types. In Rattus norvegicus (Rat), this protein is LIM/homeobox protein Lhx2 (Lhx2).